Reading from the N-terminus, the 292-residue chain is 33 kDa chaperonin (292 aa).

Disulfide bonds link C230–C232 and C263–C266.

The protein belongs to the HSP33 family. Under oxidizing conditions two disulfide bonds are formed involving the reactive cysteines. Under reducing conditions zinc is bound to the reactive cysteines and the protein is inactive.

The protein resides in the cytoplasm. In terms of biological role, redox regulated molecular chaperone. Protects both thermally unfolding and oxidatively damaged proteins from irreversible aggregation. Plays an important role in the bacterial defense system toward oxidative stress. The polypeptide is 33 kDa chaperonin (Cronobacter sakazakii (strain ATCC BAA-894) (Enterobacter sakazakii)).